A 229-amino-acid polypeptide reads, in one-letter code: Stage III sporulation protein AG (229 aa).

A helical membrane pass occupies residues 30 to 50 (YHYFLFVFVLGVSFMLVSQLF). 2 disordered regions span residues 64–93 (AVSS…KDSI) and 136–159 (SNKN…DQSS). A compositionally biased stretch (basic and acidic residues) spans 71-93 (ADSKEKTAEVFKASKSDKPKDSI).

It localises to the cell membrane. This is Stage III sporulation protein AG (spoIIIAG) from Bacillus subtilis (strain 168).